Here is a 582-residue protein sequence, read N- to C-terminus: Aspartate--tRNA ligase (582 aa).

E174 serves as a coordination point for L-aspartate. An aspartate region spans residues 198-201; it reads QITK. L-aspartate is bound at residue R220. ATP contacts are provided by residues 220–222 and Q229; that span reads RDE. H443 serves as a coordination point for L-aspartate. E477 is a binding site for ATP. R484 provides a ligand contact to L-aspartate. Position 529 to 532 (529 to 532) interacts with ATP; sequence GLDR.

It belongs to the class-II aminoacyl-tRNA synthetase family. Type 1 subfamily. Homodimer.

Its subcellular location is the cytoplasm. The enzyme catalyses tRNA(Asp) + L-aspartate + ATP = L-aspartyl-tRNA(Asp) + AMP + diphosphate. Its function is as follows. Catalyzes the attachment of L-aspartate to tRNA(Asp) in a two-step reaction: L-aspartate is first activated by ATP to form Asp-AMP and then transferred to the acceptor end of tRNA(Asp). The chain is Aspartate--tRNA ligase from Streptococcus pyogenes serotype M6 (strain ATCC BAA-946 / MGAS10394).